A 36-amino-acid chain; its full sequence is Tddefensin (36 aa).

3 cysteine pairs are disulfide-bonded: Cys3/Cys24, Cys10/Cys32, and Cys14/Cys34.

Belongs to the invertebrate defensin family. Expressed by the venom gland.

It localises to the secreted. Antibacterial peptide mostly active against Gram-positive bacteria. This Tityus discrepans (Venezuelan scorpion) protein is Tddefensin.